A 201-amino-acid chain; its full sequence is 3-isopropylmalate dehydratase small subunit (201 aa).

Belongs to the LeuD family. LeuD type 1 subfamily. Heterodimer of LeuC and LeuD.

The catalysed reaction is (2R,3S)-3-isopropylmalate = (2S)-2-isopropylmalate. It participates in amino-acid biosynthesis; L-leucine biosynthesis; L-leucine from 3-methyl-2-oxobutanoate: step 2/4. Functionally, catalyzes the isomerization between 2-isopropylmalate and 3-isopropylmalate, via the formation of 2-isopropylmaleate. The polypeptide is 3-isopropylmalate dehydratase small subunit (Shewanella sp. (strain ANA-3)).